The primary structure comprises 495 residues: RuBisCO large subunit-binding protein subunit alpha (495 aa).

It belongs to the chaperonin (HSP60) family. Oligomer of probably six alpha and six beta subunits.

Its subcellular location is the plastid. It localises to the chloroplast. Functionally, this protein binds RuBisCO small and large subunits and is implicated in the assembly of the enzyme oligomer. This Ricinus communis (Castor bean) protein is RuBisCO large subunit-binding protein subunit alpha.